We begin with the raw amino-acid sequence, 351 residues long: Translation initiation factor eIF2B subunit beta (351 aa).

The protein belongs to the eIF-2B alpha/beta/delta subunits family. Component of the translation initiation factor 2B (eIF2B) complex which is a heterodecamer of two sets of five different subunits: alpha, beta, gamma, delta and epsilon. Subunits alpha, beta and delta comprise a regulatory subcomplex and subunits epsilon and gamma comprise a catalytic subcomplex. Within the complex, the hexameric regulatory complex resides at the center, with the two heterodimeric catalytic subcomplexes bound on opposite sides.

The protein resides in the cytoplasm. It is found in the cytosol. Activated by the chemical integrated stress response (ISR) inhibitor ISRIB which stimulates guanine nucleotide exchange factor activity for both phosphorylated and unphosphorylated eIF2. Functionally, acts as a component of the translation initiation factor 2B (eIF2B) complex, which catalyzes the exchange of GDP for GTP on eukaryotic initiation factor 2 (eIF2) gamma subunit. Its guanine nucleotide exchange factor activity is repressed when bound to eIF2 complex phosphorylated on the alpha subunit, thereby limiting the amount of methionyl-initiator methionine tRNA available to the ribosome and consequently global translation is repressed. The chain is Translation initiation factor eIF2B subunit beta (Eif2b2) from Rattus norvegicus (Rat).